Consider the following 968-residue polypeptide: RNA polymerase-associated protein RapA (968 aa).

One can recognise a Helicase ATP-binding domain in the interval 164-334 (EVGQRHAPRV…FARLRLLDPD (171 aa)). 177–184 (DEVGLGKT) contributes to the ATP binding site. The DEAH box signature appears at 280-283 (DEAH). Residues 490-644 (RVEWLLNYLV…TCPTGRTIYD (155 aa)) form the Helicase C-terminal domain.

Belongs to the SNF2/RAD54 helicase family. RapA subfamily. As to quaternary structure, interacts with the RNAP. Has a higher affinity for the core RNAP than for the holoenzyme. Its ATPase activity is stimulated by binding to RNAP.

Transcription regulator that activates transcription by stimulating RNA polymerase (RNAP) recycling in case of stress conditions such as supercoiled DNA or high salt concentrations. Probably acts by releasing the RNAP, when it is trapped or immobilized on tightly supercoiled DNA. Does not activate transcription on linear DNA. Probably not involved in DNA repair. The sequence is that of RNA polymerase-associated protein RapA from Yersinia pestis bv. Antiqua (strain Antiqua).